The chain runs to 356 residues: MTERRIIHIDMDYFFAQVEMRDNPKLKGKPVIVGGKASSRGVVSTASYEARKYGVHSAMPMSQAHKLCPNGYFVTSNFGAYRETSAQIMSIFRSYTDKVEPMSLDEAYLDITELVRPDLPASKIAQYIRKDILEQTHLTASAGVSYNKFLAKLASGMNKPDGMTVIDYRNVHDILMTLDIGDFPGVGKASKKVMHDNGIFNGRDLYEKTEFELIRLFGKRGRGLYNKARGIDHSEVKSTRVRKSVGTERTFATDVNDDEEILRKVWELSGKTAERLNKLQKSAKTVTVKIKTYQFETLSKQMSLRDSVSSEEDIYNIAYLLYNDLKDPDVPIRLIGVTVGNLEQSTYKNMTIYDFI.

One can recognise a UmuC domain in the interval Ile-6–Gly-187. 2 residues coordinate Mg(2+): Asp-10 and Asp-105. Residue Glu-106 is part of the active site.

Belongs to the DNA polymerase type-Y family. In terms of assembly, monomer. Mg(2+) serves as cofactor.

The protein resides in the cytoplasm. The catalysed reaction is DNA(n) + a 2'-deoxyribonucleoside 5'-triphosphate = DNA(n+1) + diphosphate. In terms of biological role, poorly processive, error-prone DNA polymerase involved in untargeted mutagenesis. Copies undamaged DNA at stalled replication forks, which arise in vivo from mismatched or misaligned primer ends. These misaligned primers can be extended by PolIV. Exhibits no 3'-5' exonuclease (proofreading) activity. May be involved in translesional synthesis, in conjunction with the beta clamp from PolIII. This is DNA polymerase IV from Staphylococcus aureus (strain MRSA252).